The primary structure comprises 671 residues: DNA ligase (671 aa).

Residues 32–36 (DAEYD), 81–82 (SL), and E113 each bind NAD(+). The active-site N6-AMP-lysine intermediate is the K115. NAD(+) is bound by residues R136, E173, K290, and K314. Positions 408, 411, 426, and 432 each coordinate Zn(2+). Residues 593–671 (EIDSPFAGKT…ETEMLRLLGS (79 aa)) form the BRCT domain.

It belongs to the NAD-dependent DNA ligase family. LigA subfamily. Mg(2+) serves as cofactor. Requires Mn(2+) as cofactor.

It carries out the reaction NAD(+) + (deoxyribonucleotide)n-3'-hydroxyl + 5'-phospho-(deoxyribonucleotide)m = (deoxyribonucleotide)n+m + AMP + beta-nicotinamide D-nucleotide.. Functionally, DNA ligase that catalyzes the formation of phosphodiester linkages between 5'-phosphoryl and 3'-hydroxyl groups in double-stranded DNA using NAD as a coenzyme and as the energy source for the reaction. It is essential for DNA replication and repair of damaged DNA. In Escherichia coli O81 (strain ED1a), this protein is DNA ligase.